The sequence spans 214 residues: Leucyl/phenylalanyl-tRNA--protein transferase (214 aa).

This sequence belongs to the L/F-transferase family.

The protein resides in the cytoplasm. It carries out the reaction N-terminal L-lysyl-[protein] + L-leucyl-tRNA(Leu) = N-terminal L-leucyl-L-lysyl-[protein] + tRNA(Leu) + H(+). It catalyses the reaction N-terminal L-arginyl-[protein] + L-leucyl-tRNA(Leu) = N-terminal L-leucyl-L-arginyl-[protein] + tRNA(Leu) + H(+). The catalysed reaction is L-phenylalanyl-tRNA(Phe) + an N-terminal L-alpha-aminoacyl-[protein] = an N-terminal L-phenylalanyl-L-alpha-aminoacyl-[protein] + tRNA(Phe). Functionally, functions in the N-end rule pathway of protein degradation where it conjugates Leu, Phe and, less efficiently, Met from aminoacyl-tRNAs to the N-termini of proteins containing an N-terminal arginine or lysine. In Cereibacter sphaeroides (strain ATCC 17029 / ATH 2.4.9) (Rhodobacter sphaeroides), this protein is Leucyl/phenylalanyl-tRNA--protein transferase.